A 100-amino-acid chain; its full sequence is Aspartyl/glutamyl-tRNA(Asn/Gln) amidotransferase subunit C (100 aa).

The protein belongs to the GatC family. As to quaternary structure, heterotrimer of A, B and C subunits.

The enzyme catalyses L-glutamyl-tRNA(Gln) + L-glutamine + ATP + H2O = L-glutaminyl-tRNA(Gln) + L-glutamate + ADP + phosphate + H(+). It carries out the reaction L-aspartyl-tRNA(Asn) + L-glutamine + ATP + H2O = L-asparaginyl-tRNA(Asn) + L-glutamate + ADP + phosphate + 2 H(+). In terms of biological role, allows the formation of correctly charged Asn-tRNA(Asn) or Gln-tRNA(Gln) through the transamidation of misacylated Asp-tRNA(Asn) or Glu-tRNA(Gln) in organisms which lack either or both of asparaginyl-tRNA or glutaminyl-tRNA synthetases. The reaction takes place in the presence of glutamine and ATP through an activated phospho-Asp-tRNA(Asn) or phospho-Glu-tRNA(Gln). This chain is Aspartyl/glutamyl-tRNA(Asn/Gln) amidotransferase subunit C, found in Staphylococcus haemolyticus (strain JCSC1435).